The primary structure comprises 473 residues: GTPase Der (473 aa).

EngA-type G domains lie at 3-167 and 203-378; these read FTVA…GKDR and LRVA…RVWN. GTP-binding positions include 9–16, 56–60, 119–122, 209–216, 256–260, and 321–324; these read GRPNVGKS, DTAGL, NKSE, GRPNAGKS, DTAGM, and NKWD. A KH-like domain is found at 379 to 463; it reads KRISTARLNR…PIRIHFRSAE (85 aa).

It belongs to the TRAFAC class TrmE-Era-EngA-EngB-Septin-like GTPase superfamily. EngA (Der) GTPase family. As to quaternary structure, associates with the 50S ribosomal subunit.

Its function is as follows. GTPase that plays an essential role in the late steps of ribosome biogenesis. The protein is GTPase Der of Rhizobium etli (strain CIAT 652).